The sequence spans 469 residues: Coiled-coil domain-containing protein 6 (469 aa).

Positions 1–10 (MADSASESDT) are enriched in acidic residues. The segment at 1–37 (MADSASESDTDAAGGGPAAMQSSCSATSGGSGGGGGG) is disordered. Alanine 2 bears the N-acetylalanine mark. A Phosphoserine modification is found at serine 45. Residues 47–320 (FRLEELTNRL…LCRQLSESES (274 aa)) are a coiled coil. 3 consecutive repeat copies span residues 99 to 127 (EQEE…AVNY), 128 to 156 (EKEE…EQHL), and 157 to 185 (EQEQ…QLTL). The 5 X 29 AA tandem repeats stretch occupies residues 99-228 (EQEEEFISNT…AEKRILQEKL (130 aa)). The stretch at 186-199 (EQLRREKIDLENTL) is one 4; approximate repeat. The stretch at 200 to 228 (EQEQEALVNRLWKRMDKLEAEKRILQEKL) is repeat 5. Phosphoserine occurs at positions 233, 237, 242, 247, 277, and 316. A disordered region spans residues 335–362 (AQGLRPRTVSSPIPYTPSPSSSRPISPG). Threonine 342 is modified (phosphothreonine). The span at 344–361 (SSPIPYTPSPSSSRPISP) shows a compositional bias: low complexity. Serine 356 and serine 360 each carry phosphoserine. Residue arginine 380 is modified to Omega-N-methylarginine. Phosphoserine is present on residues serine 388 and serine 406. The tract at residues 394–469 (QHMGASHGIT…QHPVHPSSQP (76 aa)) is disordered. Residues 419-444 (PTPPPSPNTQSPVQPPPPPPPPPMQP) show a composition bias toward pro residues. Positions 435 to 444 (PPPPPPPMQP) match the SH3-binding motif. Over residues 460 to 469 (QHPVHPSSQP) the composition is skewed to low complexity.

The protein localises to the cytoplasm. It is found in the cytoskeleton. This Mus musculus (Mouse) protein is Coiled-coil domain-containing protein 6 (Ccdc6).